The sequence spans 579 residues: Transcription factor MTB2 (579 aa).

The interval 373 to 439 is disordered; that stretch reads GGMQIDFTNS…PLNHVEAERQ (67 aa). Over residues 382–392 the composition is skewed to low complexity; the sequence is SRPVVSPVPTV. Composition is skewed to basic and acidic residues over residues 393-415 and 425-439; these read ESEH…DERR and NGRE…AERQ. The tract at residues 428 to 441 is basic motif; degenerate; the sequence is EEPLNHVEAERQRR. One can recognise a bHLH domain in the interval 428-477; sequence EEPLNHVEAERQRREKLNQRFYALRAVVPNISKMDKASLLGDAIAHITDM. The tract at residues 442 to 477 is helix-loop-helix motif; it reads EKLNQRFYALRAVVPNISKMDKASLLGDAIAHITDM.

Its subcellular location is the nucleus. Transcription factor that negatively regulates jasmonate (JA) signaling. Negatively regulates JA-dependent response to wounding, JA-induced expression of defense genes, JA-dependent responses against herbivorous insects, and JA-dependent resistance against Botrytis cinerea infection. Plays a positive role in resistance against the bacterial pathogen Pseudomonas syringae pv tomato DC3000. The protein is Transcription factor MTB2 of Solanum lycopersicum (Tomato).